Reading from the N-terminus, the 302-residue chain is Recombination-associated protein RdgC (302 aa).

It belongs to the RdgC family.

It is found in the cytoplasm. It localises to the nucleoid. Functionally, may be involved in recombination. In Xanthomonas campestris pv. campestris (strain 8004), this protein is Recombination-associated protein RdgC.